The chain runs to 427 residues: N-myc proto-oncogene protein (427 aa).

4 disordered regions span residues 45–79, 144–173, 195–255, and 297–349; these read FELLPTPPLSPSRPAPGAPSGRGPGAVGRSGSVGL, EKLQNKTPAAPPPPPGTAGSPPVPARSGRA, AAEG…STNK, and APSP…RNHN. 2 stretches are compositionally biased toward pro residues: residues 49 to 61 and 152 to 167; these read PTPPLSPSRPAPG and AAPPPPPGTAGSPPVP. Low complexity predominate over residues 210-221; the sequence is RASSSSSSSGDD. The span at 222–242 shows a compositional bias: acidic residues; sequence TLSDSEDDEDEEEEDEEEEID. Residues Ser-224 and Ser-226 each carry the phosphoserine; by CK2 modification. In terms of domain architecture, bHLH spans 343–396; sequence ERRRNHNILERQRANDLRSSFLTLRDHVLSELVQNEKAAKVVILKKATEYVHSL. A leucine-zipper region spans residues 396–417; the sequence is LQAEEQKLLLEKEKLQARQEQL.

Efficient DNA binding requires dimerization with another bHLH protein. Binds DNA as a heterodimer with MAX.

It is found in the nucleus. This Serinus canaria (Island canary) protein is N-myc proto-oncogene protein (MYCN).